The sequence spans 244 residues: tRNA (guanine-N(1)-)-methyltransferase (244 aa).

S-adenosyl-L-methionine contacts are provided by residues Gly-114 and 134 to 139 (IGDYVL). The tract at residues 220–244 (RRPDLLEKAGASPGKSGSNFGKHDA) is disordered.

This sequence belongs to the RNA methyltransferase TrmD family. As to quaternary structure, homodimer.

The protein localises to the cytoplasm. It carries out the reaction guanosine(37) in tRNA + S-adenosyl-L-methionine = N(1)-methylguanosine(37) in tRNA + S-adenosyl-L-homocysteine + H(+). Its function is as follows. Specifically methylates guanosine-37 in various tRNAs. The polypeptide is tRNA (guanine-N(1)-)-methyltransferase (Rhizobium johnstonii (strain DSM 114642 / LMG 32736 / 3841) (Rhizobium leguminosarum bv. viciae)).